Consider the following 358-residue polypeptide: MKCILLNQAEELPIEFLPKDGVYGKGKLFDSRNMEIENFTESDILQDARRAAEAHRRARYRVQSIVRPGITLLEIVRSIEDSTRTLLKGERNNGIGFPAGMSMNSCAAHYTVNPGEQDIVLKEDDVLKIDFGTHSDGRIMDSAFTVAFKENLEPLLVAAREGTETGIKSLGVDVRVCDIGRDINEVISSYEVEIGGRMWPIRPISDLHGHSISQFRIHGGISIPAVNNRDTTRIKGDSFYAVETFATTGKGSIDDRPPCSHFVLNTYKSRKLFNKDLIKVYEFVKDSLGTLPFSPRHLDYYGLVKGGSLKSVNLLTMMGLLTPYPPLNDIDGCKVAQFEHTVYLSEHGKEVLTRGDDY.

His-109 is a binding site for substrate. A divalent metal cation-binding residues include Asp-130, Asp-141, and His-210. His-218 is a substrate binding site. Positions 243 and 339 each coordinate a divalent metal cation.

This sequence belongs to the peptidase M24A family. Methionine aminopeptidase eukaryotic type 2 subfamily. It depends on Co(2+) as a cofactor. Zn(2+) serves as cofactor. Requires Mn(2+) as cofactor. The cofactor is Fe(2+).

It localises to the cytoplasm. It catalyses the reaction Release of N-terminal amino acids, preferentially methionine, from peptides and arylamides.. In terms of biological role, cotranslationally removes the N-terminal methionine from nascent proteins. The N-terminal methionine is often cleaved when the second residue in the primary sequence is small and uncharged (Met-Ala-, Cys, Gly, Pro, Ser, Thr, or Val). This is Methionine aminopeptidase 2 from Encephalitozoon cuniculi (strain GB-M1) (Microsporidian parasite).